The primary structure comprises 201 residues: Imidazoleglycerol-phosphate dehydratase (201 aa).

The protein belongs to the imidazoleglycerol-phosphate dehydratase family.

It localises to the cytoplasm. The enzyme catalyses D-erythro-1-(imidazol-4-yl)glycerol 3-phosphate = 3-(imidazol-4-yl)-2-oxopropyl phosphate + H2O. The protein operates within amino-acid biosynthesis; L-histidine biosynthesis; L-histidine from 5-phospho-alpha-D-ribose 1-diphosphate: step 6/9. This Prochlorococcus marinus (strain MIT 9515) protein is Imidazoleglycerol-phosphate dehydratase.